The chain runs to 139 residues: Class I hydrophobin 1 (139 aa).

Residues 1–21 (MFFRISTVFVVALAAFAAASP) form the signal peptide. 4 cysteine pairs are disulfide-bonded: Cys57–Cys118, Cys64–Cys112, Cys65–Cys98, and Cys119–Cys132.

It belongs to the fungal hydrophobin family. In terms of assembly, self-assembles to form functional amyloid fibrils called rodlets. Self-assembly into fibrillar rodlets occurs spontaneously at hydrophobic:hydrophilic interfaces and the rodlets further associate laterally to form amphipathic monolayers.

The protein localises to the secreted. Its subcellular location is the cell wall. Aerial growth, conidiation, and dispersal of filamentous fungi in the environment rely upon a capability of their secreting small amphipathic proteins called hydrophobins (HPBs) with low sequence identity. Class I can self-assemble into an outermost layer of rodlet bundles on aerial cell surfaces, conferring cellular hydrophobicity that supports fungal growth, development and dispersal; whereas Class II form highly ordered films at water-air interfaces through intermolecular interactions but contribute nothing to the rodlet structure. Hah1 is a class I hydrophobin that is involved in aerial growth of mycelia, but does not play a role in pathogenesis. In Heterobasidion annosum (Root rot fungus), this protein is Class I hydrophobin 1.